The primary structure comprises 301 residues: uncharacterized protein (301 aa).

Active-site charge relay system residues include S44 and Y107. The active-site Proton donor is Y133. K162 serves as the catalytic Schiff-base intermediate with substrate.

Belongs to the DapA family. As to quaternary structure, homotetramer.

It localises to the cytoplasm. This is an uncharacterized protein from Pyrobaculum islandicum (strain DSM 4184 / JCM 9189 / GEO3).